The following is a 2036-amino-acid chain: Putative mediator of RNA polymerase II transcription subunit 24 (2036 aa).

Disordered regions lie at residues 51–70 (NNNNSNNNNNNNNNNNNNNV), 159–184 (DNIENSNNNNNNNNNNNNNNSNNNIG), 212–451 (SPSP…QTTT), 501–580 (KSVN…NNNN), 754–840 (NLKN…SHQK), 928–1124 (NNNN…NKDL), 1375–1419 (NNKN…NNNN), and 1565–1608 (NSSA…NGDT). A compositionally biased stretch (low complexity) spans 212–229 (SPSPSSSSSSSTSPSSQQ). Positions 260–270 (EIMKVKEEPIK) are enriched in basic and acidic residues. Composition is skewed to low complexity over residues 273 to 291 (TTTTTTSTTTTTSTTSTTT), 300 to 311 (TNGNGEETTITT), 387 to 451 (QPQP…QTTT), 501 to 539 (KSVNNNNNNNNNNNNNNNNNNNNNYNNNNNDSMDQNSNN), 547 to 580 (NNNNINNNNNNNNNNNNNNNNNNNNNNNNNNNNN), and 754 to 770 (NLKNNKNNNNNNNNSNG). Residues 505 to 584 (NNNNNNNNNN…NNNNNNINNI (80 aa)) are a coiled coil. The span at 778–787 (GSSTDGSNKL) shows a compositional bias: polar residues. 2 stretches are compositionally biased toward low complexity: residues 788–808 (SSTNIEEGNNNNNSSTHLNGN) and 928–943 (NNNNNTNTNNINNNKN). Residues 943-977 (NKNSKKSNNKNKNNKNNNKKNKNNNNNNNNNNNNN) adopt a coiled-coil conformation. The span at 944-964 (KNSKKSNNKNKNNKNNNKKNK) shows a compositional bias: basic residues. 5 stretches are compositionally biased toward low complexity: residues 965–999 (NNNNNNNNNNNNNNNNNNNNNNNNNNNNNNNNNNN), 1017–1118 (NNNN…NNNN), 1385–1419 (SNNSSNNSINNINNNNNNNNNNNNNNNNNNNNNNN), 1565–1584 (NSSAYSTTTTTSASTSLPKS), and 1594–1608 (SSNTSTTTTKNNGDT). Residues 1915-1968 (SKNQSLKKKQKLKQKKQQHNNNNGGEYNIDQDHIEQIQQQQQQYQKQQQQRKDE) adopt a coiled-coil conformation.

This sequence belongs to the Mediator complex subunit 24 family. In terms of assembly, component of the Mediator complex.

The protein localises to the nucleus. Its function is as follows. Component of the Mediator complex, a coactivator involved in the regulated transcription of nearly all RNA polymerase II-dependent genes. Mediator functions as a bridge to convey information from gene-specific regulatory proteins to the basal RNA polymerase II transcription machinery. Mediator is recruited to promoters by direct interactions with regulatory proteins and serves as a scaffold for the assembly of a functional preinitiation complex with RNA polymerase II and the general transcription factors. In Dictyostelium discoideum (Social amoeba), this protein is Putative mediator of RNA polymerase II transcription subunit 24 (med24).